The chain runs to 95 residues: Stationary phase-expressed protein 1 (95 aa).

The chain crosses the membrane as a helical span at residues 20–38 (FRYIMLGLVGAAVVPTAYM).

Its subcellular location is the mitochondrion membrane. The protein is Stationary phase-expressed protein 1 (SPG1) of Saccharomyces cerevisiae (strain RM11-1a) (Baker's yeast).